A 220-amino-acid chain; its full sequence is Tumor protein D54 (220 aa).

An N-acetylmethionine modification is found at methionine 1. A compositionally biased stretch (polar residues) spans 1–14 (MDSASQDINLNSPN). The disordered stretch occupies residues 1–26 (MDSASQDINLNSPNKGVLSDFMTDVP). A phosphoserine mark is found at serine 3, serine 12, and serine 19. A coiled-coil region spans residues 40 to 82 (GLTEVEEEELRAELAKVEEEIVTLRQVLAAKERHCGELKRRLG). Phosphoserine occurs at positions 96, 149, 168, and 175. Phosphothreonine is present on threonine 177. The residue at position 180 (serine 180) is a Phosphoserine. Threonine 187 is subject to Phosphothreonine. The segment at 189 to 220 (KSKVVGGRENGSDTLPSSPGSGDQTLPDHAPF) is disordered. A compositionally biased stretch (polar residues) spans 200 to 212 (SDTLPSSPGSGDQ). 2 positions are modified to phosphoserine: serine 206 and serine 209.

It belongs to the TPD52 family. In terms of assembly, forms a homodimer or heterodimer with other members of the family. Interacts with MAL2.

The polypeptide is Tumor protein D54 (Tpd52l2) (Rattus norvegicus (Rat)).